Here is a 586-residue protein sequence, read N- to C-terminus: Old nuclease (586 aa).

The interval 1 to 163 (MTVRLASVSI…VEDSTKCKNT (163 aa)) is ATPase domain N-terminus. 34-38 (NAGKS) contacts ATP. Residues 164–270 (TTIGKILSAI…SRFGHGTQRS (107 aa)) form a dimerization domain region. An ATPase domain C-terminus region spans residues 271 to 390 (IQMALIQYLA…TLSNSSYLLF (120 aa)). The interval 393-586 (EVLLVEGKTE…DEMEDFIKWI (194 aa)) is toprim domain. 6 residues coordinate a divalent metal cation: glutamate 398, glutamate 402, aspartate 453, aspartate 455, aspartate 541, and glutamate 543. Arginine 570 serves as the catalytic Stabilizes transition state or protonates leaving group.

The protein belongs to the class 1 OLD nuclease family. Mg(2+) serves as cofactor.

It catalyses the reaction Exonucleolytic cleavage in the 5'- to 3'-direction to yield nucleoside 5'-phosphates.. Its function is as follows. An exonuclease that acts preferentially on linear dsDNA, processively degrading it from 5'-3', releasing 5'-phosphomononucleotides. Initiates on 5'-phosphate and 5'-hydroxyl ends. Also acts on linear ssDNA, nicked DNA and RNA. ATP enhances but is not necessary for exonuclease activity; has ATPase activity that is not stimulated by DNA. The old protein kills E.coli recB and recC mutants and interferes with phage lambda growth. Both the exonuclease and ATPase activities are required in vivo. Probably interferes with lambda phage by degrading its linear DNA. Isolated as a mutant able to lysogenize E.coli strain C cells normally not susceptible to lysis by phage P2. This chain is Old nuclease, found in Enterobacteriaceae (Bacteriophage P2).